Reading from the N-terminus, the 436-residue chain is Trigger factor (436 aa).

Residues 163–248 (GDRVVLDFAG…VKEVAEGVLP (86 aa)) form the PPIase FKBP-type domain.

Belongs to the FKBP-type PPIase family. Tig subfamily.

Its subcellular location is the cytoplasm. The enzyme catalyses [protein]-peptidylproline (omega=180) = [protein]-peptidylproline (omega=0). Functionally, involved in protein export. Acts as a chaperone by maintaining the newly synthesized protein in an open conformation. Functions as a peptidyl-prolyl cis-trans isomerase. This Bordetella bronchiseptica (strain ATCC BAA-588 / NCTC 13252 / RB50) (Alcaligenes bronchisepticus) protein is Trigger factor.